The following is a 558-amino-acid chain: MAELNTHVNIKEKIYAVRSVVPNKSNNEIVLVLQQFDFNVDKAVQAFVDGSAIQVLKEWNMTGKKKNNKRKRSKSKQHQGNKDAKDKVERPEVGPLQPQAPLVQNGHMNGCEKDSSSPDSTREKLALTPREKKISILEEPPRAQRGVTEGGRLLQQKMSLDGNPRAIHGPSERSDGPQWSAGQPCNPSKPKAKTSPVKSNAPAAHLEIKPDELAKKRGPNIEKSVKDLQRCTVSLTRYRVMIKEEVDSSVKKIKAAFAELHNCIIDKEVSLMAEMDKVKEEAMDILTARQKKAEELKRLTDLASQMAEMQLAELRAEIKHFVSERKYDEELGKAARFSCDIEQLKAQILICGEITHPKNSYSSRTPCSSLLPLLNTHAVASGKQGNFARKSSGHNKPSEGKAANPKMVSGLANTADACHQTMPTNKQQNGPSSQRRRFNPQYHNRLNGPAKSQGGGNEADPMAKSNSRHEHRRQPHNGFRPKNKGGAKNQEAPLGTKAPEAPPHSEKARRRQHAADNLEARPFRGNVSRVSQCNLCPSRIEVSTEATVLSVPAVTLVA.

Ala-2 carries the post-translational modification N-acetylalanine. Residues 63–79 (GKKKNNKRKRSKSKQHQ) are compositionally biased toward basic residues. Residues 63-204 (GKKKNNKRKR…SPVKSNAPAA (142 aa)) are disordered. 2 stretches are compositionally biased toward basic and acidic residues: residues 80–92 (GNKD…ERPE) and 110–142 (GCEK…EPPR). Ser-120 is subject to Phosphoserine. The stretch at 279–344 (KEEAMDILTA…ARFSCDIEQL (66 aa)) forms a coiled coil. Disordered regions lie at residues 385–406 (GNFA…ANPK) and 421–514 (TMPT…RQHA). Positions 421–433 (TMPTNKQQNGPSS) are enriched in polar residues. A compositionally biased stretch (basic residues) spans 469–485 (HEHRRQPHNGFRPKNKG).

It belongs to the SPATS2 family.

It localises to the cytoplasm. The protein resides in the nucleus. Its subcellular location is the nucleolus. This chain is SPATS2-like protein (Spats2l), found in Mus musculus (Mouse).